Consider the following 151-residue polypeptide: MSDLFAYTDGACSGNPGPGGWGVLMLAREGEAVVKERTLQGGEALTTNNRMELMAAISALEALTRPTEITIVTDSAYVKNGVTTWIHGWKRNGWKTADRKPVKNAELWERLDAAQQRHKVVWRWIKGHAGHAENERADELARAGMAPFKTR.

Residues 1 to 146 (MSDLFAYTDG…ADELARAGMA (146 aa)) form the RNase H type-1 domain. 4 residues coordinate Mg(2+): Asp-9, Glu-52, Asp-74, and Asp-138.

This sequence belongs to the RNase H family. Monomer. Mg(2+) is required as a cofactor.

It localises to the cytoplasm. It catalyses the reaction Endonucleolytic cleavage to 5'-phosphomonoester.. Endonuclease that specifically degrades the RNA of RNA-DNA hybrids. The chain is Ribonuclease H from Cereibacter sphaeroides (strain ATCC 17025 / ATH 2.4.3) (Rhodobacter sphaeroides).